Reading from the N-terminus, the 118-residue chain is Large ribosomal subunit protein bL20 (118 aa).

The protein belongs to the bacterial ribosomal protein bL20 family.

Its function is as follows. Binds directly to 23S ribosomal RNA and is necessary for the in vitro assembly process of the 50S ribosomal subunit. It is not involved in the protein synthesizing functions of that subunit. The protein is Large ribosomal subunit protein bL20 of Lactobacillus johnsonii (strain CNCM I-12250 / La1 / NCC 533).